The chain runs to 368 residues: UV excision repair protein rhp23 (368 aa).

The 77-residue stretch at 1–77 folds into the Ubiquitin-like domain; that stretch reads MNLTFKNLQQ…IVCMVSRPKT (77 aa). Low complexity-rich tracts occupy residues 76-88 and 103-124; these read KTSTSTPKSAASP and APSSTVAESTSTTQTVAAAAPS. The interval 76–134 is disordered; the sequence is KTSTSTPKSAASPAPNPPASVPEKKVEAPSSTVAESTSTTQTVAAAAPSNPDTTATSEA. Phosphoserine occurs at positions 84 and 87. 2 UBA domains span residues 135–185 and 320–360; these read PIDA…LLTG and QEES…LFEH. Ser364 is subject to Phosphoserine.

The protein resides in the nucleus. In terms of biological role, involved in postreplication repair of UV-damaged DNA. Postreplication repair functions in gap-filling of a daughter strand on replication of damaged DNA. Protects ubiquitin chains against dissambly by deubiquitinating enzymes thereby promoting protein degradation. The polypeptide is UV excision repair protein rhp23 (rhp23) (Schizosaccharomyces pombe (strain 972 / ATCC 24843) (Fission yeast)).